Reading from the N-terminus, the 599-residue chain is UvrABC system protein C (599 aa).

The 79-residue stretch at 18–96 (QLPGVYKMLG…IKQHRPPYNI (79 aa)) folds into the GIY-YIG domain. The region spanning 207 to 242 (KELNQELIAKMEQAAADLEFEKAVFYRDRLSLLREV) is the UVR domain.

This sequence belongs to the UvrC family. Interacts with UvrB in an incision complex.

Its subcellular location is the cytoplasm. The UvrABC repair system catalyzes the recognition and processing of DNA lesions. UvrC both incises the 5' and 3' sides of the lesion. The N-terminal half is responsible for the 3' incision and the C-terminal half is responsible for the 5' incision. This is UvrABC system protein C from Acinetobacter baumannii (strain SDF).